The following is a 2327-amino-acid chain: Nonribosomal peptide synthetase apmB (2327 aa).

Residues 214–605 are adenylation 1; it reads DTQAKSRPDS…GRKDMQIKLR (392 aa). The region spanning 734-810 is the Carrier 1 domain; the sequence is EPATATGKVL…EMADACTKVI (77 aa). Ser771 carries the O-(pantetheine 4'-phosphoryl)serine modification. Positions 845-1259 are condensation 1; it reads EDLYPCTAMQ…IFISSKDQES (415 aa). Residues 1281–1675 are adenylation 2; sequence ERIAERPDHE…RRKDTQVKLR (395 aa). One can recognise a Carrier 2 domain in the interval 1816–1892; sequence PPTTDMQITM…AISAVAETLS (77 aa). Ser1853 carries the O-(pantetheine 4'-phosphoryl)serine modification. A condensation 2 region spans residues 1937 to 2260; sequence TDFQSLAING…VFQYQDFGGE (324 aa). The interval 2299 to 2327 is disordered; the sequence is RVDLPRRPSPAGDTRDGPTAASDSPSRAR.

The protein belongs to the NRP synthetase family.

It carries out the reaction N-benzoyl-L-phenylalaninol + benzoate + L-phenylalanine + 2 ATP = asperphenamate + 2 AMP + 2 diphosphate + H(+). It functions in the pathway secondary metabolite biosynthesis. Its function is as follows. Nonribosomal peptide synthetase; part of the gene cluster that mediates the biosynthesis of asperphenamate, a rare linear amino acid ester that exhibits antitumor activity towards a number of cell lines. The structure of asperphenamate contains two subunits, N-benzoylphenylalanine and N-benzoylphenylalaninol, which are connected by an inter-molecular ester bond. The first step of asperphenamate biosynthesis is the generation of N-benzoylphenylalaninol by the nonribosomal peptide synthase apmA. Using phenylalanine and benzoic acid as substrates, apmA catalyzes amide bond formation and tethers the intermediate into the NRPS chain. Then, the terminal R domain of apmA catalyzes the reduction reaction to get the shunt product N-benzoylphenylalaninol. Subsequently, the nonribosomal peptide synthase apmB activates the same substrates as does apmA (phenylalanine and benzoic acid) to produce N-benzoylphenylalanine before condensing N-benzoylphenylalanine and N-benzoylphenylalaninol to release asperphenamate. In Penicillium brevicompactum, this protein is Nonribosomal peptide synthetase apmB.